A 1075-amino-acid polypeptide reads, in one-letter code: MAEDDAEKAFFEAQAMNAGSMGYNGAEDQNANASDSDEYDPSSTLQDQYPAPSENLQLQETDTPTSVSQPQPSFREDADPAGNAHPSQPPSRPESQASTSVPATGVSVQPKTRTIGGFVVEDEDEDDAGDADYEPPAVLGVEDMNIIPSQPIPGNANEATSTPDVSLDEAAQESASAKNVPNSSLSSVSLAFKNDGSMDLGQNLYNSRTSLQPEIARESATATPAPDSPSTAKGRLPHDRVGILEDRIREDPRGDIPAWLELINEHRSRNRIDSARDVYERFLKVFPLSAEMWVAYATMESELNELFRLEQIFNRTLLTIPAVQLWTVYLDYVRRRNPLSTDTTGQARKVISSAYELALQHIGMDKESGSIWADYIQFIRSGPGNVGGSGWQDQQKMDLLRKAYQRAICVPMQAVNTLWKEYDQFEMGLNKLTGRKFLQEQSPSYMTARSSYTELQNFTRDLNRTTLPRLPPVPGSEGDFEYLQQIEIWKRWINWEKGDPLVLKEDDLTAYKGRVVYVYKQALMALRFLPEIWFEAADFCFLNDMETEGNEFLKNGIDANPESCLLAFKRADRLEITSESEQDPIKRGAKVREPYDRLLDALYDLIAKARTREAQDVARLEETFKLRPDTQPAANDDDDDDQSETKAKESVKNAQIEAVRHAHSIQIGILSKTVSFAWIALMRAMRRIQGKGKPGEVPGSRQVFADARKRGRITSDVYIASALIEYHCYKDPAATKIFERGAKLFPEDENFALEYLKHLIDINDIINARAVFEMTVRKLAANPENVHKTKPIFAFLHEYESRYGDLVQVINLETRMRELFPDDPTLEQFAHRFSAPNFDPTTFRPIISPSQTRPKTVYPGGQVPSRHGTPSSRFPEASVTNSPKRPLEDFDDDMSRPRKFVRGESPLRTTTQRRQLDQQKRTQTALQVPSSGSQYRSQGSPAPLPRDIVYLLSVIPPASTYTAGRFSAEKMIDLVRRLDLPASISQIPLPQSARGLGTGQTTIGGQQFSDDGGYYYKGGVVDMCALHFMDDGVFRLYVAGLAGNILARILFFGSGGLLAYLLRTVQIWDPEIPRR.

Disordered stretches follow at residues 20–185 and 215–237; these read SMGY…NSSL and IARE…GRLP. Composition is skewed to polar residues over residues 54 to 72 and 93 to 112; these read ENLQ…QPQP and PESQ…QPKT. The span at 120–133 shows a compositional bias: acidic residues; sequence VEDEDEDDAGDADY. HAT repeat units lie at residues 270 to 302, 304 to 335, 346 to 381, 395 to 428, 465 to 498, and 510 to 542; these read NRID…MESE, NELF…YVRR, QARK…FIRS, QKMD…FEMG, TTLP…WEKG, and AYKG…FCFL. 2 disordered regions span residues 621–653 and 840–941; these read EETF…SVKN and PTTF…QGSP. Over residues 868 to 883 the composition is skewed to polar residues; it reads GTPSSRFPEASVTNSP. The span at 885–896 shows a compositional bias: basic and acidic residues; that stretch reads RPLEDFDDDMSR. The span at 925–940 shows a compositional bias: polar residues; sequence ALQVPSSGSQYRSQGS.

The protein resides in the nucleus. It is found in the cytoplasm. In terms of biological role, component of the cleavage factor IA (CFIA) complex, which is involved in the endonucleolytic cleavage during polyadenylation-dependent pre-mRNA 3'-end formation. The polypeptide is mRNA 3'-end-processing protein rna14 (rna14) (Emericella nidulans (strain FGSC A4 / ATCC 38163 / CBS 112.46 / NRRL 194 / M139) (Aspergillus nidulans)).